We begin with the raw amino-acid sequence, 614 residues long: Putative ankyrin repeat protein RBE_0997 (614 aa).

9 ANK repeats span residues 3-32 (KDEE…DPNI), 36-65 (DDKP…NPNA), 69-98 (DGEP…DPNL), 102-131 (RKNT…NLNA), 135-164 (SGYP…NPNL), 168-197 (DGSP…NVEA), 201-231 (DGNT…DKEK), 239-268 (NGET…TVNI), and 272-301 (AGYT…ELKE). One can recognise a Glutamine amidotransferase type-1 domain in the interval 348 to 580 (NVEDIDYRKI…VQSAETFMNK (233 aa)). The active-site Nucleophile is cysteine 444. Residues histidine 547 and glutamate 549 contribute to the active site.

The sequence is that of Putative ankyrin repeat protein RBE_0997 from Rickettsia bellii (strain RML369-C).